We begin with the raw amino-acid sequence, 396 residues long: NADH-quinone oxidoreductase subunit D 2 (396 aa).

The protein belongs to the complex I 49 kDa subunit family. In terms of assembly, NDH-1 is composed of 14 different subunits. Subunits NuoB, C, D, E, F, and G constitute the peripheral sector of the complex.

It localises to the cell inner membrane. It catalyses the reaction a quinone + NADH + 5 H(+)(in) = a quinol + NAD(+) + 4 H(+)(out). NDH-1 shuttles electrons from NADH, via FMN and iron-sulfur (Fe-S) centers, to quinones in the respiratory chain. The immediate electron acceptor for the enzyme in this species is believed to be ubiquinone. Couples the redox reaction to proton translocation (for every two electrons transferred, four hydrogen ions are translocated across the cytoplasmic membrane), and thus conserves the redox energy in a proton gradient. The sequence is that of NADH-quinone oxidoreductase subunit D 2 from Beijerinckia indica subsp. indica (strain ATCC 9039 / DSM 1715 / NCIMB 8712).